Consider the following 1070-residue polypeptide: MFIILKRNILINMSFLLNLGELGTFFADEIENLENFTNWISSDFINFINAIVNDIKNIASFLGQAISDIPTFMVNIATNFLTILQNFVQTAISTIQGFVSWFEQQIVGAFEFLSSIASDFINSAYSFFQNVANVFAQIISGVISDFLNFFGANMKHISNAISQLSQFLSPFIAPITIGKFLPVIVDKLAEILPEIEIDLAPVGLGGKIPIKFGEIIKAFAETSVDFLNEIRTELATTLKEFIKEPFISDFKISAREIFNEIGLGDLPFADPPFQLIGRWVAVRSFDEVKDHLRETILLTGYPAWFTNAYLESPVNDFVPKNPLFRPVGIRDLITGSQYGILNISDLEKYAYNNLITPKTAKLMYQNQTARLLQRAVEQGIRQFVITPQKAYEEIISNINLTGKELFLKTFTLEYEYAVQRIVRQFLRSLLSRALSNFGKPYLDFKYLDNTIAKLFKDLGYPEEVRTVFDTMITQSQLIDTNQLLLRQLQQIVKLGIFNEKKIKEELKANKFNEQVALQILESELQFAQLQNTLKEYQFKLKSFLISPKDVEKDLKHLGFDSAIISALIYENQVEQLIKFQLTNIESLAKKGYLSLDEIKKQFKAIGIIKEYEDAFINFINQELQISAFLTILKSQLRQFQIDPKVAEAELKKLNINEYLSNQIIQEEYNINIAKLHLSVLETIAKTLYYDQQQLSGELEKIIKDKTALELYIKKFYYEYIYPKIVNYHVQLARHGILSDISKLPKEVIDYEIKPALLTYQTTLEIEYIKESLKDLEIKPTDAINELEKLGMQKDIAQLIVNTYIPTFYNVHTIIQNIIEGQLYKVGKVPINLGNAESELRKLGIPDSQIKILLDQYSTTFGLDIWRKHLPSISIIENAIKYNYLDQKLIEYSFIPSELLNLYINYYQHLLVGQEVQSFKSEYITALIYNYQNLQLENLLKQYGINEALLSVIKLFAQVRKIVLGLQELYLTPTKALSISEYVSNPQQLLQKVFTEFQIPQELQNTYFEYARNRRVSRYVNEIITTINLLFEKHKIDLGTAQSYLQQLKKYGLTDEEIQLIILNWQLRSAY.

The UBA domain occupies 477-523 (LIDTNQLLLRQLQQIVKLGIFNEKKIKEELKANKFNEQVALQILESE).

This is an uncharacterized protein from Sulfolobus islandicus rod-shaped virus 1 (SIRV-1).